The primary structure comprises 127 residues: Small ribosomal subunit protein uS11 (127 aa).

This sequence belongs to the universal ribosomal protein uS11 family. Part of the 30S ribosomal subunit. Interacts with proteins S7 and S18. Binds to IF-3.

Its function is as follows. Located on the platform of the 30S subunit, it bridges several disparate RNA helices of the 16S rRNA. Forms part of the Shine-Dalgarno cleft in the 70S ribosome. The protein is Small ribosomal subunit protein uS11 of Chlorobium luteolum (strain DSM 273 / BCRC 81028 / 2530) (Pelodictyon luteolum).